We begin with the raw amino-acid sequence, 182 residues long: Protein transport protein gos1 (182 aa).

The Cytoplasmic portion of the chain corresponds to 1–163 (MKSMLLRDSV…RKTSIRRRRD (163 aa)). The chain crosses the membrane as a helical; Anchor for type IV membrane protein span at residues 164 to 181 (SIILALLISVLMLLFLFF). Position 182 (His182) is a topological domain, vesicular.

It belongs to the GOSR1 family. As to quaternary structure, component of a SNARE complex consisting of sed5, gos1, ykt6, and sft1.

It localises to the golgi apparatus membrane. Nonessential SNARE involved in retrograde transport within the Golgi complex. This chain is Protein transport protein gos1 (gos1), found in Schizosaccharomyces pombe (strain 972 / ATCC 24843) (Fission yeast).